The following is a 1228-amino-acid chain: DNA repair protein rad5 (1228 aa).

Disordered stretches follow at residues 1 to 96, 194 to 242, 280 to 302, and 445 to 474; these read MDRH…GTLT, PPVR…VLPS, QPPT…PRVS, and KAMD…QELE. Positions 34 to 43 are enriched in low complexity; that stretch reads PSSSPQFSAP. Residues 70-83 show a composition bias toward acidic residues; the sequence is HNDDDDDDDDDDDE. A compositionally biased stretch (polar residues) spans 211–237; that stretch reads PKKSSTSQARSRSHAQAQPQPQSNTPT. The span at 445–454 shows a compositional bias: basic and acidic residues; sequence KAMDKAKAGD. Residues 465-474 show a composition bias toward acidic residues; that stretch reads EEAEEGQELE. Residues 574-784 form the Helicase ATP-binding domain; sequence PKQEQHCLGG…FSLVRFLRVE (211 aa). 587 to 594 contributes to the ATP binding site; sequence DEMGLGKT. The DEAH box motif lies at 735 to 738; that stretch reads DEAH. The RING-type zinc-finger motif lies at 967–1012; the sequence is CPICAEEPMIDQAVTGCWHSACKKCLLDYIKHQTDRNEVPRCFQCR. One can recognise a Helicase C-terminal domain in the interval 1060 to 1216; the sequence is ALISHLRTLR…MMSDEEKKMQ (157 aa).

The protein belongs to the SNF2/RAD54 helicase family.

Its subcellular location is the cytoplasm. It localises to the nucleus. Probable helicase, member of the UBC2/RAD6 epistasis group. Functions with DNA repair protein uvs-2/rad18 in error-free postreplication DNA repair. Involved in the maintenance of wild-type rates of instability of simple repetitive sequences such as poly(GT) repeats. Seems to be involved in maintaining a balance which acts in favor of error-prone non-homologous joining during DNA double-strand breaks repairs. In Neurospora crassa (strain ATCC 24698 / 74-OR23-1A / CBS 708.71 / DSM 1257 / FGSC 987), this protein is DNA repair protein rad5 (mus-41).